Here is a 257-residue protein sequence, read N- to C-terminus: Adenylate kinase (257 aa).

ATP is bound at residue 52-57; it reads GAGKGT. Positions 72–101 are NMP; that stretch reads ATGDMLRSQVAKKTELGKEAKKIMDQGGLV. Residues T73, R78, 99–101, 128–131, and Q135 contribute to the AMP site; these read GLV and GFPR. Residues 169–206 form an LID region; that stretch reads GRLVHPASGRSYHKIFNPPKNEMLDDITGEPLIQRSDD. Residues R170 and 179–180 each bind ATP; that span reads SY. AMP is bound by residues R203 and R214. Q242 contacts ATP.

This sequence belongs to the adenylate kinase family. AK2 subfamily. In terms of assembly, monomer.

It is found in the cytoplasm. Its subcellular location is the cytosol. The protein resides in the mitochondrion intermembrane space. It catalyses the reaction AMP + ATP = 2 ADP. Its function is as follows. Catalyzes the reversible transfer of the terminal phosphate group between ATP and AMP. Plays an important role in cellular energy homeostasis and in adenine nucleotide metabolism. Adenylate kinase activity is critical for regulation of the phosphate utilization and the AMP de novo biosynthesis pathways. The sequence is that of Adenylate kinase (adk1) from Aspergillus clavatus (strain ATCC 1007 / CBS 513.65 / DSM 816 / NCTC 3887 / NRRL 1 / QM 1276 / 107).